A 382-amino-acid polypeptide reads, in one-letter code: Alkanesulfonate monooxygenase (382 aa).

The protein belongs to the SsuD family.

It catalyses the reaction an alkanesulfonate + FMNH2 + O2 = an aldehyde + FMN + sulfite + H2O + 2 H(+). In terms of biological role, catalyzes the desulfonation of aliphatic sulfonates. This is Alkanesulfonate monooxygenase from Pseudomonas putida (strain W619).